We begin with the raw amino-acid sequence, 214 residues long: Proteasome subunit beta type-6 (214 aa).

Residues 1 to 14 (MEAPEWLDNAVDLG) constitute a propeptide, removed in mature form. The active-site Nucleophile is Thr-15.

It belongs to the peptidase T1B family. In terms of assembly, the 26S proteasome consists of a 20S proteasome core and two 19S regulatory subunits. The 20S proteasome core is composed of 28 subunits that are arranged in four stacked rings, resulting in a barrel-shaped structure. The two end rings are each formed by seven alpha subunits, and the two central rings are each formed by seven beta subunits. The catalytic chamber with the active sites is on the inside of the barrel.

The protein resides in the cytoplasm. It localises to the nucleus. The enzyme catalyses Cleavage of peptide bonds with very broad specificity.. Its function is as follows. The proteasome is a multicatalytic proteinase complex which is characterized by its ability to cleave peptides with Arg, Phe, Tyr, Leu, and Glu adjacent to the leaving group at neutral or slightly basic pH. The proteasome has an ATP-dependent proteolytic activity. In Dictyostelium discoideum (Social amoeba), this protein is Proteasome subunit beta type-6 (psmB6).